The following is a 93-amino-acid chain: Small ribosomal subunit protein uS19 (93 aa).

The protein belongs to the universal ribosomal protein uS19 family.

Functionally, protein S19 forms a complex with S13 that binds strongly to the 16S ribosomal RNA. The sequence is that of Small ribosomal subunit protein uS19 from Parafrankia sp. (strain EAN1pec).